We begin with the raw amino-acid sequence, 293 residues long: Movement protein BC1 (293 aa).

Residues 207–228 (SWASRSTIGPSPSYAGSDQGDA) are disordered. A compositionally biased stretch (polar residues) spans 209 to 222 (ASRSTIGPSPSYAG).

This sequence belongs to the begomovirus movement protein BC1 family. As to quaternary structure, binds to dimeric supercoiled plasmid DNA. Phosphorylated.

Its subcellular location is the host cell membrane. The protein localises to the host microsome membrane. It localises to the host endoplasmic reticulum membrane. Movement protein involved in the cell-to-cell and systemic transport of viral genomic DNA. Begomoviruses use 2 proteins to transport their DNA from cell to cell. The nuclear shuttle protein (NSP) shuttles it between nucleus and cytoplasm and the movement protein (MP) probably transports the DNA-NSP complex to the cell periphery and facilitates further movement across the cell wall. The sequence is that of Movement protein BC1 from Tomato golden mosaic virus (strain Yellow vein) (TGMV).